Reading from the N-terminus, the 940-residue chain is MSDYKPTLNLPDTDFPMRGDLAKREPAMLKRWQDMDLYQKVRDVTKGRKSFILHDGPPYANGSIHIGHAVNKILKDIIVKSKTVSGFDAPYIPGWDCHGLPIEHKVEQLIGKAGTKVSYKEFRAKCREYAYTQIEEQKKDFIRLGVMGDWENPYLTMNFQTEANIVRALGKIAENGHLVKGFKPVYWSVVGGSALAEAEVEYQDKTSLSLDVRYAPQDEAALLAKFSAVEGEGKVSVVIWTTTPWTLPASQAVSIHPEFNYALVEVDMGLGKERLILAEDMVASVMSRYGVTDFRIVGRTVGAELAGTVLNHPFLQRDIPVILGEHVTTEAGTGCVHTAPDHGVDDFNVGRENGIGTINLVQDNGVYSDAAGEFAGLHVYKVDDAVLEALNRNNALVFESKIFHSYPHCWRTKTPLIFRATPQWFISMTKEGLLDSAKHAVEGVKWVPSWGQNRMEGMLNNSPDWCVSRQRTWGVPIALFINKETQELHPETPRLIEEVAKRIEVEGIDAWFEMEAEELLGADAEKYSKVTDTLDVWFDSGVTHYSVIDQRDELSFPADLYLEGSDQHRGWFQSSLKTSIAIRGVPPYKQVLTHGFTVDGDGRKMSKSLGNVLSPQKVMDTLGADIIRLWVAATDYTTEMTVSDEILKRVADSYRRIRNTARFMMANLNGFNPATDMVPAKDMIALDRWIVDRAALLQKELNTAYNEYQFHTVNQKIQNFCSVDLGGFYLDVIKDRQYTTQKDSLARRSAQTALYHVIEAFSRWIAPILSFTADEIWQTLPGERGESVFLETWYEGLEELTGDEAMGREFWKQVLEAKVATNKVLEAARSEGKMKASLSADITLYCDDALQTTLNRLGEELRFVLIASDVKVLPLSQAGEDAVATDLDGLKVHVELSKYTKCVRCWHHREEVGKRDAHPELCDRCISNLPDGEGEQRLYA.

Positions 58-68 (PYANGSIHIGH) match the 'HIGH' region motif. L-isoleucyl-5'-AMP is bound at residue Glu563. The 'KMSKS' region motif lies at 604-608 (KMSKS). Residue Lys607 coordinates ATP. Zn(2+) contacts are provided by Cys902, Cys905, Cys922, and Cys925.

It belongs to the class-I aminoacyl-tRNA synthetase family. IleS type 1 subfamily. In terms of assembly, monomer. Zn(2+) is required as a cofactor.

The protein resides in the cytoplasm. The enzyme catalyses tRNA(Ile) + L-isoleucine + ATP = L-isoleucyl-tRNA(Ile) + AMP + diphosphate. Catalyzes the attachment of isoleucine to tRNA(Ile). As IleRS can inadvertently accommodate and process structurally similar amino acids such as valine, to avoid such errors it has two additional distinct tRNA(Ile)-dependent editing activities. One activity is designated as 'pretransfer' editing and involves the hydrolysis of activated Val-AMP. The other activity is designated 'posttransfer' editing and involves deacylation of mischarged Val-tRNA(Ile). This is Isoleucine--tRNA ligase from Marinomonas sp. (strain MWYL1).